Reading from the N-terminus, the 213-residue chain is Probable nicotinate-nucleotide adenylyltransferase (213 aa).

It belongs to the NadD family.

The enzyme catalyses nicotinate beta-D-ribonucleotide + ATP + H(+) = deamido-NAD(+) + diphosphate. It functions in the pathway cofactor biosynthesis; NAD(+) biosynthesis; deamido-NAD(+) from nicotinate D-ribonucleotide: step 1/1. Functionally, catalyzes the reversible adenylation of nicotinate mononucleotide (NaMN) to nicotinic acid adenine dinucleotide (NaAD). The polypeptide is Probable nicotinate-nucleotide adenylyltransferase (Escherichia coli O139:H28 (strain E24377A / ETEC)).